The sequence spans 57 residues: Large ribosomal subunit protein bL32 (57 aa).

The segment covering Met-1–Gln-19 has biased composition (basic residues). Residues Met-1–Trp-20 are disordered.

The protein belongs to the bacterial ribosomal protein bL32 family.

This is Large ribosomal subunit protein bL32 from Mycobacterium avium (strain 104).